A 102-amino-acid polypeptide reads, in one-letter code: Citrate lyase acyl carrier protein (102 aa).

Position 14 is an O-(phosphoribosyl dephospho-coenzyme A)serine (Ser-14).

It belongs to the CitD family. As to quaternary structure, oligomer with a subunit composition of (alpha,beta,gamma)6.

The protein resides in the cytoplasm. Functionally, covalent carrier of the coenzyme of citrate lyase. The chain is Citrate lyase acyl carrier protein from Streptococcus equi subsp. equi (strain 4047).